Here is a 360-residue protein sequence, read N- to C-terminus: Threonine synthase (360 aa).

At Lys-69 the chain carries N6-(pyridoxal phosphate)lysine. Pyridoxal 5'-phosphate-binding positions include Asn-95, 196–200 (GNAGN), and Thr-326.

Belongs to the threonine synthase family. As to quaternary structure, homodimer. It depends on pyridoxal 5'-phosphate as a cofactor.

The enzyme catalyses O-phospho-L-homoserine + H2O = L-threonine + phosphate. Its pathway is amino-acid biosynthesis; L-threonine biosynthesis; L-threonine from L-aspartate: step 5/5. Functionally, catalyzes the gamma-elimination of phosphate from L-phosphohomoserine and the beta-addition of water to produce L-threonine. The polypeptide is Threonine synthase (thrC) (Mycobacterium bovis (strain ATCC BAA-935 / AF2122/97)).